The primary structure comprises 1166 residues: Tectonin beta-propeller repeat-containing protein 1 (1166 aa).

TECPR repeat units lie at residues 209–240 (LSVWAVSLQGKVWYREDVSHPNPEGSSWSLVE), 254–285 (DLIWATLWEGQALVREGVCRNNPKGSYWSMVE), 301–332 (SVVWAITKDRKVWFRRGVNSHNPCGTSWIEMV), and 344–376 (DQVWGISCEDRAVYFRQGVTPSELSGKTWKAIV). Phosphoserine occurs at positions 386, 388, 391, 413, and 418. Positions 404–496 (RGSGTESAPS…PAELPWTNID (93 aa)) are disordered. The segment covering 407 to 416 (GTESAPSDTD) has biased composition (polar residues). Residues 451 to 462 (TSGNTDHSTENA) show a composition bias toward polar residues. Positions 466-481 (EGKEKAPETSRSDECR) are enriched in basic and acidic residues. A PH domain is found at 616 to 722 (KTGALQWWCD…WLALLSLSCC (107 aa)). One copy of the TECPR 5 repeat lies at 734–761 (QAIWSVTCKGDIFVSEPSPDLEARERLL). Residue serine 943 is modified to Phosphoserine. 4 TECPR repeats span residues 958–989 (VALWAVSDKGDVLCRLGVSELNPAGSSWLHVG), 1003–1034 (YQVWAVARDGSAFYRGSVSPSQPAGDCWYHIP), 1049–1080 (TSVYALDENGNLWYRAGITPSYPQGSSWEHVS), and 1092–1132 (DQVW…DYGI).

Belongs to the TECPR1 family. As to quaternary structure, interacts with ATG5; the interaction is direct. Interacts with WIPI2. Interacts with the ATG5-ATG12 conjugate, the interaction is however mutually exclusive with ATG16, since it does not interact with ATG12-ATG5-ATG16 complex.

The protein resides in the cytoplasmic vesicle. It is found in the autophagosome membrane. The protein localises to the lysosome membrane. Functionally, tethering factor involved in autophagy. Involved in autophagosome maturation by promoting the autophagosome fusion with lysosomes: acts by associating with both the ATG5-ATG12 conjugate and phosphatidylinositol-3-phosphate (PtdIns(3)P) present at the surface of autophagosomes. Also involved in selective autophagy against bacterial pathogens, by being required for phagophore/preautophagosomal structure biogenesis and maturation. This is Tectonin beta-propeller repeat-containing protein 1 (Tecpr1) from Mus musculus (Mouse).